Consider the following 357-residue polypeptide: Ribonuclease 3 (357 aa).

Residues 6–155 (IKFIQDQIGY…ILGAIALDSN (150 aa)) enclose the RNase III domain. Glu-45 lines the Mg(2+) pocket. Residue Asp-49 is part of the active site. Residues Asp-141 and Glu-144 each contribute to the Mg(2+) site. Residue Glu-144 is part of the active site. DRBM domains lie at 198-267 (PLHC…YLKD) and 285-355 (DSIG…FVLE).

Belongs to the ribonuclease III family. Homodimer. Requires Mg(2+) as cofactor.

The protein resides in the cytoplasm. The enzyme catalyses Endonucleolytic cleavage to 5'-phosphomonoester.. In terms of biological role, digests double-stranded RNA. Involved in the processing of primary rRNA transcript to yield the immediate precursors to the large and small rRNAs (23S and 16S). Processes some mRNAs, and tRNAs when they are encoded in the rRNA operon. Processes pre-crRNA and tracrRNA of type II CRISPR loci if present in the organism. The chain is Ribonuclease 3 (rnc) from Roseburia hominis (strain DSM 16839 / JCM 17582 / NCIMB 14029 / A2-183).